The following is a 582-amino-acid chain: GPI-anchor transamidase component PIGT (582 aa).

The first 25 residues, 1 to 25 (MAAAMPLGLPLRLLVLLLVGRGCCG), serve as a signal peptide directing secretion. Over 26–529 (CAEGPRDSLR…NLPTPDFSMP (504 aa)) the chain is Lumenal. N-linked (GlcNAc...) asparagine glycosylation is present at N168. Disulfide bonds link C199/C276 and C230/C235. 2 N-linked (GlcNAc...) asparagine glycosylation sites follow: N295 and N331. N465, D525, S527, and N531 together coordinate a 2-acyl-6-[6-phosphoethanolamine-alpha-D-mannosyl-(1-&gt;2)-6-phosphoethanolamine-alpha-D-mannosyl-(1-&gt;6)-2-phosphoethanolamine-alpha-D-mannosyl-(1-&gt;4)-alpha-D-glucosaminyl]-1-(1-radyl,2-acyl-sn-glycero-3-phospho)-1D-myo-inositol. A helical membrane pass occupies residues 530-552 (YNVICLTCTVVAVCYGSFYNLLT). Over 553–582 (RTFHIEEPKSGGLAKRLANLIRRARGVPPL) the chain is Cytoplasmic.

Belongs to the PIGT family. Heteropentamer. Part of the GPI-anchor transamidase complex, consisting of PIGK, PIGT, PIGS, PIGU and GAA1. In terms of processing, the disulfide bond between PIGK/GPI8 and PIGT is important for normal enzyme activity.

It is found in the endoplasmic reticulum membrane. Its pathway is glycolipid biosynthesis; glycosylphosphatidylinositol-anchor biosynthesis. Its function is as follows. Component of the glycosylphosphatidylinositol-anchor (GPI-anchor) transamidase (GPI-T) complex that catalyzes the formation of the linkage between a proprotein and a GPI-anchor and participates in GPI anchored protein biosynthesis. May play a crucial role in GPI-T complex assembly in the luminal layer. Binds GPI-anchor. The sequence is that of GPI-anchor transamidase component PIGT from Mus musculus (Mouse).